Here is a 632-residue protein sequence, read N- to C-terminus: 1-deoxy-D-xylulose-5-phosphate synthase (632 aa).

Thiamine diphosphate-binding positions include His-73 and 114 to 116; that span reads SHA. Mg(2+) is bound at residue Asp-146. Residues 147-148, Asn-176, Tyr-287, and Glu-368 contribute to the thiamine diphosphate site; that span reads GA. Asn-176 contacts Mg(2+).

The protein belongs to the transketolase family. DXPS subfamily. As to quaternary structure, homodimer. Mg(2+) is required as a cofactor. Requires thiamine diphosphate as cofactor.

The catalysed reaction is D-glyceraldehyde 3-phosphate + pyruvate + H(+) = 1-deoxy-D-xylulose 5-phosphate + CO2. It functions in the pathway metabolic intermediate biosynthesis; 1-deoxy-D-xylulose 5-phosphate biosynthesis; 1-deoxy-D-xylulose 5-phosphate from D-glyceraldehyde 3-phosphate and pyruvate: step 1/1. Functionally, catalyzes the acyloin condensation reaction between C atoms 2 and 3 of pyruvate and glyceraldehyde 3-phosphate to yield 1-deoxy-D-xylulose-5-phosphate (DXP). This chain is 1-deoxy-D-xylulose-5-phosphate synthase, found in Corynebacterium glutamicum (strain R).